The following is a 696-amino-acid chain: SEC14 domain and spectrin repeat-containing protein 1 (696 aa).

The CRAL-TRIO domain maps to 1 to 153 (MEASVILPIL…DFGGSLTYDH (153 aa)). 3 Spectrin repeats span residues 275–378 (EEIQ…NLLQ), 381–494 (LEFH…LKML), and 500–602 (FKCE…HRLE).

This sequence belongs to the SOLO family. As to quaternary structure, interacts (via the spectrin 1 repeat) with TRPC4 and TRPC5 (via CIRB domain). Interacts with CTNNB1.

Functionally, may act as the primary docking protein directing membrane turnover and assembly of the transient receptor potential channels TRPC4 and TRPC5. Binds phospholipids such as phosphatidylinositol monophosphates, phosphatidylinositol diphosphates (PIP2s) and phosphatidic acid, but not less polar lipids including phosphatidylcholine, phosphatidylserine, and phosphatidylinositol. The binding to PIP2s is calcium dependent. Might be involved in the plasma membrane localization of CTNNB1. This is SEC14 domain and spectrin repeat-containing protein 1 (Sestd1) from Mus musculus (Mouse).